Consider the following 108-residue polypeptide: Large ribosomal subunit protein uL23 (108 aa).

It belongs to the universal ribosomal protein uL23 family. As to quaternary structure, part of the 50S ribosomal subunit. Contacts protein L29, and trigger factor when it is bound to the ribosome.

Its function is as follows. One of the early assembly proteins it binds 23S rRNA. One of the proteins that surrounds the polypeptide exit tunnel on the outside of the ribosome. Forms the main docking site for trigger factor binding to the ribosome. In Leptothrix cholodnii (strain ATCC 51168 / LMG 8142 / SP-6) (Leptothrix discophora (strain SP-6)), this protein is Large ribosomal subunit protein uL23.